The primary structure comprises 556 residues: MQFDYIIIGAGSAGNVLATRLTEDPNTTVLLLEAGGPDYRFDFRTQMPAALAFPLQGKRYNWAYETEPEPFMNNRRMECGRGKGLGGSSLINGMCYIRGNALDLDNWAQEPGLENWSYLDCLPYYRKAETRDVGENDYHGGDGPVSVITSKPGVNPLFEAMIEAGMQAGYPRTDDLNGYQQEGFGPMDRTVTPHGRRASTSRGYLDQAKSRPNLTIRTHAMTDHIIFDGKRAVGVEWLEGDSTIPTRAAANKEVLLCAGAIASPQILQRSGVGNAELLAEFDIPLVHELPGVGENLQDHLEMYLQYECKEPVSLYPALQWWNQPRIGAEWLFGGTGVGASNHFEAGGFIRSREEFAWPNIQYHFLPVAINYNGSNAVKEHGFQCHVGSMRSPSRGHVRIKSRDPHQHPGILFNYMSHEQDWQEFRDAIRITREIMHQPALDQYRGREISPGVECQTDEQLDEFVRNHAETAFHPCGTCKMGYDEMAVVDGEGRVHGLEGLRVVDASIMPQIITGNLNATTIMIGEKIADMIRGKEALPRSTAGYFVANGMTVRAKK.

Residue 4–33 (DYIIIGAGSAGNVLATRLTEDPNTTVLLLE) participates in FAD binding. Catalysis depends on His-473, which acts as the Proton acceptor.

Belongs to the GMC oxidoreductase family. Requires FAD as cofactor.

It carries out the reaction choline + A = betaine aldehyde + AH2. The catalysed reaction is betaine aldehyde + NAD(+) + H2O = glycine betaine + NADH + 2 H(+). Its pathway is amine and polyamine biosynthesis; betaine biosynthesis via choline pathway; betaine aldehyde from choline (cytochrome c reductase route): step 1/1. In terms of biological role, involved in the biosynthesis of the osmoprotectant glycine betaine. Catalyzes the oxidation of choline to betaine aldehyde and betaine aldehyde to glycine betaine at the same rate. The protein is Oxygen-dependent choline dehydrogenase of Escherichia coli O6:K15:H31 (strain 536 / UPEC).